The chain runs to 586 residues: Arginine--tRNA ligase (586 aa).

Residues Ala-128–His-138 carry the 'HIGH' region motif.

It belongs to the class-I aminoacyl-tRNA synthetase family. In terms of assembly, monomer.

The protein localises to the cytoplasm. It carries out the reaction tRNA(Arg) + L-arginine + ATP = L-arginyl-tRNA(Arg) + AMP + diphosphate. This chain is Arginine--tRNA ligase, found in Thioalkalivibrio sulfidiphilus (strain HL-EbGR7).